Consider the following 135-residue polypeptide: CDGSH iron-sulfur domain-containing protein 2 (135 aa).

Residues 1-37 (MVLDSVARIVKVQLPAYLKQLPVPDSITGFARLTVSD) lie on the Lumenal side of the membrane. The helical transmembrane segment at 38 to 60 (WLRLLPFLGVLALLGYLAVRPFF) threads the bilayer. Residues 61 to 135 (PKKKQQKDSL…GPLILKKKEV (75 aa)) are Cytoplasmic-facing. Cys-99, Cys-101, Cys-110, and His-114 together coordinate [2Fe-2S] cluster.

This sequence belongs to the CISD protein family. CISD2 subfamily. As to quaternary structure, homodimer. Interacts with BCL2; the interaction is direct and disrupted by BIK interaction with BCL2. Interacts with BCL2L1. Interacts with ITPR1. [2Fe-2S] cluster serves as cofactor. As to expression, brain.

The protein localises to the endoplasmic reticulum membrane. It is found in the mitochondrion outer membrane. Functionally, regulator of autophagy that contributes to antagonize BECN1-mediated cellular autophagy at the endoplasmic reticulum. Participates in the interaction of BCL2 with BECN1 and is required for BCL2-mediated depression of endoplasmic reticulum Ca(2+) stores during autophagy. Contributes to BIK-initiated autophagy, while it is not involved in BIK-dependent activation of caspases. Involved in life span control, probably via its function as regulator of autophagy. The polypeptide is CDGSH iron-sulfur domain-containing protein 2 (Cisd2) (Mus musculus (Mouse)).